The sequence spans 694 residues: Follicle-stimulating hormone receptor (694 aa).

The N-terminal stretch at 1 to 17 (MALLLVSLLAFLSLGSG) is a signal peptide. Disulfide bonds link cysteine 18-cysteine 25 and cysteine 23-cysteine 32. Residues 18–46 (CHHRVCHCSNRVFLCQESKVTEIPSDLPR) form the LRRNT domain. Residues 18–365 (CHHRVCHCSN…EDIMGYDILR (348 aa)) lie on the Extracellular side of the membrane. LRR repeat units lie at residues 49 to 72 (LELR…FGDL), 73 to 97 (EKIE…LPKL), 98 to 118 (HEIR…AFQN), 119 to 143 (LPNL…KIQS), 144 to 169 (LQKV…MGLS), 170 to 192 (FEST…AFNG), 193 to 216 (TQLD…VFQG), 217 to 240 (ASGP…GLEN), and 241 to 259 (LKKL…PSLE). 2 N-linked (GlcNAc...) asparagine glycosylation sites follow: asparagine 191 and asparagine 199. Asparagine 268 is a glycosylation site (N-linked (GlcNAc...) asparagine). 4 disulfide bridges follow: cysteine 275–cysteine 345, cysteine 276–cysteine 292, cysteine 276–cysteine 355, and cysteine 292–cysteine 337. An N-linked (GlcNAc...) asparagine glycan is attached at asparagine 293. At tyrosine 334 the chain carries Sulfotyrosine. A helical membrane pass occupies residues 366–386 (VLIWFISILAITGNIIVLVIL). The Cytoplasmic portion of the chain corresponds to 387–397 (ITSQYKLTVPR). Residues 398 to 420 (FLMCNLAFADLCIGIYLLLIASV) traverse the membrane as a helical segment. Over 421 to 442 (DIHTKSQYHNYAIDWQTGAGCD) the chain is Extracellular. A disulfide bridge links cysteine 441 with cysteine 516. The helical transmembrane segment at 443–464 (AAGFFTVFASELSVYTLTAITL) threads the bilayer. Residues 465-484 (ERWHTITHAMQLECKVQLRH) lie on the Cytoplasmic side of the membrane. The chain crosses the membrane as a helical span at residues 485 to 507 (AASVMLVGWIFAFAVALLPIFGI). Residues 508-527 (STYMKVSICLPMDIDSPLSQ) lie on the Extracellular side of the membrane. A helical membrane pass occupies residues 528-549 (LYVMSLLVLNVLAFVVICGCYI). The Cytoplasmic segment spans residues 550–572 (HIYLTVRNPNIVSSSSDTKIAKR). A helical membrane pass occupies residues 573 to 596 (MAILIFTDFLCMAPISFFAISASL). Residues 597–607 (KVPLITVSKSK) are Extracellular-facing. A helical transmembrane segment spans residues 608-629 (ILLVLFYPINSCANPFLYAIFT). The Cytoplasmic segment spans residues 630-694 (KNFRRDFFIL…LVPLSHLAQN (65 aa)).

The protein belongs to the G-protein coupled receptor 1 family. FSH/LSH/TSH subfamily. Homotrimer. Functions as a homotrimer binding the FSH hormone heterodimer composed of CGA and FSHB. Interacts with ARRB2. Interacts with APPL2; interaction is independent of follicle stimulating hormone stimulation. N-glycosylated; indirectly required for FSH-binding, possibly via a conformational change that allows high affinity binding of hormone. In terms of processing, sulfated.

Its subcellular location is the cell membrane. In terms of biological role, g protein-coupled receptor for follitropin, the follicle-stimulating hormone. Through cAMP production activates the downstream PI3K-AKT and ERK1/ERK2 signaling pathways. This chain is Follicle-stimulating hormone receptor (FSHR), found in Equus caballus (Horse).